Here is a 77-residue protein sequence, read N- to C-terminus: Acyl carrier protein (77 aa).

In terms of domain architecture, Carrier spans 1-76 (MATFDDVKAV…DVVNYIDNLK (76 aa)). Ser-36 bears the O-(pantetheine 4'-phosphoryl)serine mark.

It belongs to the acyl carrier protein (ACP) family. 4'-phosphopantetheine is transferred from CoA to a specific serine of apo-ACP by AcpS. This modification is essential for activity because fatty acids are bound in thioester linkage to the sulfhydryl of the prosthetic group.

The protein localises to the cytoplasm. Its pathway is lipid metabolism; fatty acid biosynthesis. Carrier of the growing fatty acid chain in fatty acid biosynthesis. This chain is Acyl carrier protein, found in Campylobacter jejuni subsp. doylei (strain ATCC BAA-1458 / RM4099 / 269.97).